We begin with the raw amino-acid sequence, 338 residues long: Ketol-acid reductoisomerase (NADP(+)) (338 aa).

Positions 1 to 181 (MKVYYDKDAD…GGTKGGVIET (181 aa)) constitute a KARI N-terminal Rossmann domain. Residues 24 to 27 (YGSQ), arginine 47, and serine 52 contribute to the NADP(+) site. Histidine 107 is an active-site residue. Residue glycine 133 participates in NADP(+) binding. The 146-residue stretch at 182-327 (NFREETETDL…GQLRDMMPWI (146 aa)) folds into the KARI C-terminal knotted domain. Positions 190, 194, 226, and 230 each coordinate Mg(2+). Residue serine 251 coordinates substrate.

The protein belongs to the ketol-acid reductoisomerase family. Mg(2+) is required as a cofactor.

The enzyme catalyses (2R)-2,3-dihydroxy-3-methylbutanoate + NADP(+) = (2S)-2-acetolactate + NADPH + H(+). It carries out the reaction (2R,3R)-2,3-dihydroxy-3-methylpentanoate + NADP(+) = (S)-2-ethyl-2-hydroxy-3-oxobutanoate + NADPH + H(+). It functions in the pathway amino-acid biosynthesis; L-isoleucine biosynthesis; L-isoleucine from 2-oxobutanoate: step 2/4. The protein operates within amino-acid biosynthesis; L-valine biosynthesis; L-valine from pyruvate: step 2/4. Functionally, involved in the biosynthesis of branched-chain amino acids (BCAA). Catalyzes an alkyl-migration followed by a ketol-acid reduction of (S)-2-acetolactate (S2AL) to yield (R)-2,3-dihydroxy-isovalerate. In the isomerase reaction, S2AL is rearranged via a Mg-dependent methyl migration to produce 3-hydroxy-3-methyl-2-ketobutyrate (HMKB). In the reductase reaction, this 2-ketoacid undergoes a metal-dependent reduction by NADPH to yield (R)-2,3-dihydroxy-isovalerate. In Dechloromonas aromatica (strain RCB), this protein is Ketol-acid reductoisomerase (NADP(+)).